A 371-amino-acid polypeptide reads, in one-letter code: Diguanylate cyclase A (371 aa).

The region spanning 233–366 is the GGDEF domain; sequence ETLSILMIDI…GRNRVTLSKN (134 aa). The Mg(2+) site is built by D241, I242, and E284. Residue E284 is the Proton acceptor of the active site.

In terms of assembly, exists as a homodimer and as larger aggregates. Both dimers and aggregates possess DGC activity. Mg(2+) is required as a cofactor. Requires Mn(2+) as cofactor.

The protein localises to the cytoplasm. The enzyme catalyses 2 GTP = 3',3'-c-di-GMP + 2 diphosphate. With respect to regulation, allosterically regulated by a feedback inhibition loop. Its function is as follows. Catalyzes the conversion of GTP to cyclic-di-GMP (c-di-GMP). Shows activity under aerobic and anaerobic reaction conditions. The polypeptide is Diguanylate cyclase A (Treponema denticola (strain ATCC 35405 / DSM 14222 / CIP 103919 / JCM 8153 / KCTC 15104)).